The primary structure comprises 678 residues: MTKNLLVELGLEELPAYVVTPSEKQLGEKMAAFLKENRLSFEAIQTFSTPRRLAVRVTGLSDKQSDLTEDFKGPAKKIALDSDGNFTKAAQGFVRGKGLTVEDIEFREIKGEEYVYVTKEEVGQAVEAIVPGVVDVLKSLTFPVSMHWAGNSFEYIRPVHTLTVLLDEQEFDLDFLDIKGGRVSRGHRFLGKETKIQSALSYEEDLRKQFVIADPCEREQMIVDQIKKIEAKHGVRIEIDADLLNEVLNLVEYPTAFMGSFDAKYLEVPEEVLVTSMKEHQRYFVVRDQDGKLLPNFISVRNGNAERLKNVIKGNEKVLVARLEDGEFFWREDQKLVISDLVEKLNNVTFHEKIGSLREHMIRTGQITVLLAEKAGLSVDETVDLARAAAIYKFDLLTGMVGEFDELQGIMGEKYTLLAGETPAVAAAIREHYMPTSAEGELPESKVGAVLAIADKLDTILSFFSVGLIPSGSNDPYALRRATQGVVRILDAFGWHIAMDELIDSLYALKFDSLTYENKAEVMDFIKARVDKMMGSTPKDIKEAVLAGSNFVVADMLEAASALVEVSKEEDFKPSVESLSRAFNLAEKAEGVATVDSALFENDQEKALAEAVETLVLSGPASQQLKQLFALSPVIDAFFENTMVMAEDQAVRQNRLAILSQLTKKAAKFACFNQINTK.

Belongs to the class-II aminoacyl-tRNA synthetase family. In terms of assembly, tetramer of two alpha and two beta subunits.

It is found in the cytoplasm. The catalysed reaction is tRNA(Gly) + glycine + ATP = glycyl-tRNA(Gly) + AMP + diphosphate. The polypeptide is Glycine--tRNA ligase beta subunit (Streptococcus pneumoniae (strain ATCC BAA-255 / R6)).